The chain runs to 299 residues: MATLLSERGAQASWRDYLELTKPKVVLLMLITSLVGMFLATRAGVPWTVLLFGNLGIALCAGGAAAVNHVVDRQIDSVMARTHKRPLAEGRVSPAAALTFAFVLGVSGLALLLTFTNALAAWLTLASLIGYAVIYTGFLKRATPQNIVIGGLAGAAPPLLGWVAVTGQVTAEPLLLVLIIFAWTPPHFWALAIHRKDEYAKVNVPMLPVTHGVHYTKVHILLYTAMLLAVSFMPFAIHMSGPLYLAAAVLLGARFLYWTIALYRDSRPHAAIKTFKFSIWYLFALFIALLVDHYLLLDF.

A run of 9 helical transmembrane segments spans residues 25-45 (VVLL…RAGV), 47-67 (WTVL…AAAV), 95-115 (AAAL…LLTF), 119-139 (LAAW…TGFL), 147-167 (IVIG…AVTG), 173-193 (PLLL…ALAI), 218-238 (VHIL…FAIH), 243-263 (LYLA…IALY), and 277-297 (FSIW…YLLL).

The protein belongs to the UbiA prenyltransferase family. Protoheme IX farnesyltransferase subfamily.

It is found in the cell inner membrane. It catalyses the reaction heme b + (2E,6E)-farnesyl diphosphate + H2O = Fe(II)-heme o + diphosphate. It participates in porphyrin-containing compound metabolism; heme O biosynthesis; heme O from protoheme: step 1/1. Its function is as follows. Converts heme B (protoheme IX) to heme O by substitution of the vinyl group on carbon 2 of heme B porphyrin ring with a hydroxyethyl farnesyl side group. The sequence is that of Protoheme IX farnesyltransferase from Stutzerimonas stutzeri (strain A1501) (Pseudomonas stutzeri).